The sequence spans 1386 residues: Pleckstrin homology domain-containing family G member 2 (1386 aa).

2 disordered regions span residues 1 to 21 and 36 to 82; these read MPEGAQGLSLSKPSPSLGCGR and TAPA…PLPG. Composition is skewed to low complexity over residues 8-17 and 45-62; these read LSLSKPSPSL and SPRGSGSSTSLSTVGSEG. Ser90 is subject to Phosphoserine. Residues 102-283 enclose the DH domain; sequence RLERVAREIV…TAVAWYINDM (182 aa). In terms of domain architecture, PH spans 313-411; that stretch reads ELVLEGAFRG…WIHCLQRLFF (99 aa). 5 disordered regions span residues 436–540, 554–612, 701–739, 790–815, and 829–859; these read KSKP…PSGT, GLRD…PSPL, EPAEAPATRRELFSGSNPGKLGEPPSGGKAGPEEDEEGV, ILEDSDLGGDSGSGKAGAPSSERTAS, and QQMQRAETRASANAPRRRPRVLAQPQPSPCL. Thr445 is modified (phosphothreonine). Phosphoserine is present on residues Ser450 and Ser469. Residues 592-603 show a composition bias toward acidic residues; it reads SEEEEEEEEGLE. Phosphoserine is present on residues Ser911 and Ser1049. Disordered regions lie at residues 1037–1099 and 1162–1191; these read PVPK…PLPC and TSPKQGSLPDIQGPAAAPPLPEPSLTDTQV. Polar residues-rich tracts occupy residues 1048-1059 and 1073-1086; these read ESPTNIPLTKQG and QPIQPLSWHGSSLD. Thr1257 carries the phosphothreonine modification. Ser1261 and Ser1310 each carry phosphoserine. 2 disordered regions span residues 1291-1333 and 1367-1386; these read ARRQ…ARRL and TQESMGLHRAQGAPDAPFHM. The segment covering 1301 to 1317 has biased composition (low complexity); sequence PAASRGSWSSAPTSRAS. Over residues 1318 to 1330 the composition is skewed to pro residues; sequence SPPPQPQPPPPPA.

In terms of biological role, may be a transforming oncogene with exchange activity for CDC42. May be a guanine-nucleotide exchange factor (GEF) for RAC1 and CDC42. Activated by the binding to subunits beta and gamma of the heterotrimeric guanine nucleotide-binding protein (G protein). Involved in the regulation of actin polymerization. In Homo sapiens (Human), this protein is Pleckstrin homology domain-containing family G member 2 (PLEKHG2).